The sequence spans 226 residues: UPF0758 protein Spy49_0870 (226 aa).

Positions 103–225 constitute an MPN domain; that stretch reads SVLTSVQVAE…YYSFREKSTL (123 aa). H174, H176, and D187 together coordinate Zn(2+). Positions 174 to 187 match the JAMM motif motif; it reads HNHPSGNIEPSSND.

It belongs to the UPF0758 family.

The protein is UPF0758 protein Spy49_0870 of Streptococcus pyogenes serotype M49 (strain NZ131).